The primary structure comprises 236 residues: Apoptosis regulator Bcl-2 (236 aa).

Residues 10–30 carry the BH4 motif; that stretch reads DNREIVMKYIHYKLSQRGYEW. Thr-69 is modified (phosphothreonine; by MAPK8). Ser-70 is subject to Phosphoserine; by MAPK8 and PKC. Ser-84 bears the Phosphoserine; by MAPK8 mark. Positions 90–104 match the BH3 motif; that stretch reads VHLTLRRAGDDFSRR. A BH1 motif is present at residues 133–152; it reads ELFRDGVNWGRIVAFFEFGG. The BH2 signature appears at 184–199; sequence TWIQDNGGWDAFVELY. The helical transmembrane segment at 209-230 threads the bilayer; sequence FSWLSLKTLLSLALVGACITLG.

The protein belongs to the Bcl-2 family. In terms of assembly, forms homodimers, and heterodimers with BAX, BAD, BAK and Bcl-X(L). Heterodimerization with BAX requires intact BH1 and BH2 motifs, and is necessary for anti-apoptotic activity. Component of the complex, at least composed of LRPPRC, BECN1 and BCL2; the interactions prevent BECN1 from forming an autophagy-inducing complex with PIK3C3. Interacts with EI24. Also interacts with APAF1, BBC3, BCL2L1, BNIPL, MRPL41 and TP53BP2. Binding to FKBP8 seems to target BCL2 to the mitochondria and probably interferes with the binding of BCL2 to its targets. Interacts with BAG1 in an ATP-dependent manner. Interacts with RAF1 (the 'Ser-338' and 'Ser-339' phosphorylated form). Interacts (via the BH4 domain) with EGLN3; the interaction prevents the formation of the BAX-BCL2 complex and inhibits the anti-apoptotic activity of BCL2. Interacts with G0S2; this interaction also prevents the formation of the anti-apoptotic BAX-BCL2 complex. Interacts with RTL10/BOP. Interacts with the SCF(FBXO10) complex. Interacts (via the loop between motifs BH4 and BH3) with NLRP1 (via LRR repeats), but not with NLRP2, NLRP3, NLRP4, PYCARD, nor MEFV. Interacts with GIMAP3/IAN4, GIMAP4/IAN1 and GIMAP5/IAN5. Interacts with BCAP31. Interacts with IRF3; the interaction is inhibited by Sendai virus infection. Interacts with BECN1; thereby inhibiting autophagy in non-starvation conditions. Interacts with AMBRA1; thereby inhibiting autophagy. Phosphorylation/dephosphorylation on Ser-70 regulates anti-apoptotic activity. Growth factor-stimulated phosphorylation on Ser-70 by PKC is required for the anti-apoptosis activity and occurs during the G2/M phase of the cell cycle. In the absence of growth factors, BCL2 appears to be phosphorylated by other protein kinases such as ERKs and stress-activated kinases. Phosphorylated by MAPK8/JNK1 at Thr-69, Ser-70 and Ser-84, which stimulates starvation-induced autophagy. Dephosphorylated by protein phosphatase 2A (PP2A). In terms of processing, proteolytically cleaved by caspases during apoptosis. The cleaved protein, lacking the BH4 motif, has pro-apoptotic activity, causes the release of cytochrome c into the cytosol promoting further caspase activity. Post-translationally, monoubiquitinated by PRKN, leading to an increase in its stability. Ubiquitinated by SCF(FBXO10), leading to its degradation by the proteasome.

Its subcellular location is the mitochondrion outer membrane. It is found in the nucleus membrane. It localises to the endoplasmic reticulum membrane. The protein localises to the cytoplasm. Functionally, suppresses apoptosis in a variety of cell systems including factor-dependent lymphohematopoietic and neural cells. Regulates cell death by controlling the mitochondrial membrane permeability. Appears to function in a feedback loop system with caspases. Inhibits caspase activity either by preventing the release of cytochrome c from the mitochondria and/or by binding to the apoptosis-activating factor (APAF-1). Also acts as an inhibitor of autophagy: interacts with BECN1 and AMBRA1 during non-starvation conditions and inhibits their autophagy function. May attenuate inflammation by impairing NLRP1-inflammasome activation, hence CASP1 activation and IL1B release. The chain is Apoptosis regulator Bcl-2 (BCL2) from Cricetulus griseus (Chinese hamster).